Here is a 606-residue protein sequence, read N- to C-terminus: Transmembrane 9 superfamily member 1 (606 aa).

An N-terminal signal peptide occupies residues 1-27 (MTVLGYPRSWSCHCLPVLILLLGIGHG). A glycan (N-linked (GlcNAc...) asparagine) is linked at Asn-178. 4 helical membrane-spanning segments follow: residues 237-257 (LSII…AVIL), 310-330 (VLGV…MALL), 339-359 (GAIN…SGYV), and 373-393 (VWNI…TWSV). Asn-401 is a glycosylation site (N-linked (GlcNAc...) asparagine). Transmembrane regions (helical) follow at residues 412–432 (ILLL…IGGI), 469–489 (VGGF…FATV), 499–519 (GILF…SIAL), and 535–555 (SVLS…FYYA). A glycan (N-linked (GlcNAc...) asparagine) is linked at Asn-559. Residues 570–590 (FGYSLLTGYVFFLMLGTISFF) traverse the membrane as a helical segment.

This sequence belongs to the nonaspanin (TM9SF) (TC 9.A.2) family.

Its subcellular location is the lysosome membrane. It localises to the cytoplasmic vesicle. The protein localises to the autophagosome membrane. Plays an essential role in autophagy. The protein is Transmembrane 9 superfamily member 1 (Tm9sf1) of Mus musculus (Mouse).